The primary structure comprises 569 residues: Isocitrate dehydrogenase kinase/phosphatase (569 aa).

ATP is bound by residues 316-322 (APGVRGM) and lysine 337. Aspartate 372 is an active-site residue.

The protein belongs to the AceK family.

It localises to the cytoplasm. It catalyses the reaction L-seryl-[isocitrate dehydrogenase] + ATP = O-phospho-L-seryl-[isocitrate dehydrogenase] + ADP + H(+). In terms of biological role, bifunctional enzyme which can phosphorylate or dephosphorylate isocitrate dehydrogenase (IDH) on a specific serine residue. This is a regulatory mechanism which enables bacteria to bypass the Krebs cycle via the glyoxylate shunt in response to the source of carbon. When bacteria are grown on glucose, IDH is fully active and unphosphorylated, but when grown on acetate or ethanol, the activity of IDH declines drastically concomitant with its phosphorylation. The sequence is that of Isocitrate dehydrogenase kinase/phosphatase from Pseudomonas putida (strain W619).